The chain runs to 970 residues: Sodium/calcium exchanger 1 (970 aa).

The signal sequence occupies residues 1-32; sequence MLRLSLSPTYSLGFHLLAMMTLLISHVDHITA. Residues 33–71 are Extracellular-facing; sequence ETEMVEEGNETGECTGSYYCKKGVILPIWEPQDPSFGDK. Asn41 carries N-linked (GlcNAc...) asparagine glycosylation. Residues 72-92 traverse the membrane as a helical segment; that stretch reads IARATVYFVAMVYMFLGVSII. Residues 93-133 lie on the Cytoplasmic side of the membrane; it reads ADRFMSSIEVITSQEKEITIKKPNGETTKTTVRIWNETVSN. Residues 134-154 traverse the membrane as a helical segment; sequence LTLMALGSSAPEILLSVIEVC. An Alpha-1 repeat occupies 138–178; the sequence is ALGSSAPEILLSVIEVCGHNFTAGDLGPSTIVGSAAFNMFI. The Extracellular segment spans residues 155-167; the sequence is GHNFTAGDLGPST. Residue Asn157 is glycosylated (N-linked (GlcNAc...) asparagine). Residues 168-188 traverse the membrane as a helical segment; sequence IVGSAAFNMFIIIALCVYVVP. At 189–201 the chain is on the cytoplasmic side; it reads DGETRKIKHLRVF. Residues 202–222 form a helical membrane-spanning segment; that stretch reads FVTAAWSIFAYTWLYIILSVI. Topologically, residues 223–228 are extracellular; it reads SPGVVE. A helical transmembrane segment spans residues 229-249; sequence VWEGLLTFFFFPICVVFAWVA. Topologically, residues 250 to 797 are cytoplasmic; the sequence is DRRLLFYKYV…FVPPTEYWNG (548 aa). Residues 251–270 form a putative calmodulin-binding region region; the sequence is RRLLFYKYVYKRYRAGKQRG. 2 positions are modified to phosphoserine: Ser282 and Ser389. Calx-beta domains lie at 393–493 and 524–624; these read VNTE…VHLS and ATVT…LEIG. Ca(2+) contacts are provided by Glu417, Asp453, Asp478, Asp479, Ile481, Glu483, Glu486, Asp530, Asp531, Asp532, Glu548, Asp584, Asp610, Glu611, Glu612, and Glu715. A helical membrane pass occupies residues 798–818; that stretch reads WACFIVSILMIGLLTAFIGDL. Residues 819-821 lie on the Extracellular side of the membrane; that stretch reads ASH. Residues 822–842 form a helical membrane-spanning segment; it reads FGCTIGLKDSVTAVVFVALGT. The Alpha-2 repeat unit spans residues 839-875; sequence ALGTSVPDTFASKVAATQDQYADASIGNVTGSNAVNV. The Cytoplasmic segment spans residues 843–871; that stretch reads SVPDTFASKVAATQDQYADASIGNVTGSN. The chain crosses the membrane as a helical span at residues 872–892; sequence AVNVFLGIGVAWSIAAIYHAA. The Extracellular portion of the chain corresponds to 893–903; that stretch reads NGEQFKVSPGT. A helical membrane pass occupies residues 904 to 924; sequence LAFSVTLFTIFAFINVGVLLY. At 925–941 the chain is on the cytoplasmic side; it reads RRRPEIGGELGGPRTAK. A helical transmembrane segment spans residues 942–962; that stretch reads LLTSCLFVLLWLLYIFFSSLE. Residues 963–970 are Extracellular-facing; sequence AYCHIKGF.

The protein belongs to the Ca(2+):cation antiporter (CaCA) (TC 2.A.19) family. SLC8 subfamily.

Its subcellular location is the cell membrane. It carries out the reaction Ca(2+)(in) + 3 Na(+)(out) = Ca(2+)(out) + 3 Na(+)(in). Its activity is regulated as follows. Activated by micromolar levels of Ca(2+). Mediates the exchange of one Ca(2+) ion against three to four Na(+) ions across the cell membrane, and thereby contributes to the regulation of cytoplasmic Ca(2+) levels and Ca(2+)-dependent cellular processes. Contributes to Ca(2+) transport during excitation-contraction coupling in muscle. In a first phase, voltage-gated channels mediate the rapid increase of cytoplasmic Ca(2+) levels due to release of Ca(2+) stores from the endoplasmic reticulum. SLC8A1 mediates the export of Ca(2+) from the cell during the next phase, so that cytoplasmic Ca(2+) levels rapidly return to baseline. Required for normal embryonic heart development and the onset of heart contractions. This chain is Sodium/calcium exchanger 1 (SLC8A1), found in Cavia porcellus (Guinea pig).